The sequence spans 101 residues: Small ribosomal subunit protein uS14 (101 aa).

The protein belongs to the universal ribosomal protein uS14 family. In terms of assembly, part of the 30S ribosomal subunit. Contacts proteins S3 and S10.

Functionally, binds 16S rRNA, required for the assembly of 30S particles and may also be responsible for determining the conformation of the 16S rRNA at the A site. This is Small ribosomal subunit protein uS14 from Buchnera aphidicola subsp. Acyrthosiphon pisum (strain APS) (Acyrthosiphon pisum symbiotic bacterium).